A 276-amino-acid chain; its full sequence is Rhomboid protease GlpG (276 aa).

6 helical membrane passes run 94–114 (GPVT…MQIL), 142–162 (ALMH…WYLG), 169–189 (LGSG…GYVQ), 192–212 (FSGP…GYVW), 229–249 (LIIF…GMSM), and 250–270 (ANGA…VDSL). The Nucleophile role is filled by Ser-201. His-254 is a catalytic residue.

The protein belongs to the peptidase S54 family.

It localises to the cell inner membrane. It catalyses the reaction Cleaves type-1 transmembrane domains using a catalytic dyad composed of serine and histidine that are contributed by different transmembrane domains.. Its function is as follows. Rhomboid-type serine protease that catalyzes intramembrane proteolysis. The protein is Rhomboid protease GlpG of Escherichia coli (strain 55989 / EAEC).